Consider the following 231-residue polypeptide: Probable tetraspanin tspE (231 aa).

Residues 1-21 lie on the Cytoplasmic side of the membrane; that stretch reads MTFVDNFEFNQNTPRLVRGPF. The helical transmembrane segment at 22-42 threads the bilayer; that stretch reads IILNSIIFSLSFILLCSTGII. At 43-58 the chain is on the extracellular side; it reads IYYLNEYYLVKDLTIP. The helical transmembrane segment at 59 to 79 threads the bilayer; sequence LGSFILSAYMVITTIVGGIAI. Residues 80–83 are Cytoplasmic-facing; sequence WKKK. A helical transmembrane segment spans residues 84-104; sequence LGLHLTFMVFLVVLIVCLVGV. At 105-195 the chain is on the extracellular side; that stretch reads SAKMIVDSGN…VESILKYLGY (91 aa). The chain crosses the membrane as a helical span at residues 196–216; sequence YGIVLSVIELILLILSGFFLL. The Cytoplasmic segment spans residues 217 to 231; that stretch reads KTNKNVKSKSFILQD.

The protein belongs to the tetraspanin (TM4SF) family.

Its subcellular location is the membrane. The sequence is that of Probable tetraspanin tspE (tspE) from Dictyostelium discoideum (Social amoeba).